We begin with the raw amino-acid sequence, 316 residues long: Aprataxin (316 aa).

The FHA-like domain maps to 1–38 (HASARGEGFLLLKADCNKGYVTVKQIGVNPTSVDLVDV). The segment at 104–142 (KKMEVVDTQSSSADLRPSKSSVSPHEGTTSRKEHLGHWS) is disordered. The span at 110–130 (DTQSSSADLRPSKSSVSPHEG) shows a compositional bias: polar residues. Residues 142–247 (SQGLKSSMQD…ISQDFDSPAL (106 aa)) enclose the HIT domain. 2 interaction with DNA substrate regions span residues 167–171 (DKYPK) and 229–230 (SM). Positions 232–236 (QLHLH) match the Histidine triad motif motif. His234 (tele-AMP-histidine intermediate) is an active-site residue. Residues 291–313 (LRCHLCKQQLSTIPQLKEHLKKH) form a C2H2-type zinc finger.

Its subcellular location is the nucleus. The protein resides in the nucleoplasm. It is found in the nucleolus. The catalysed reaction is a 5'-end adenosine-5'-diphospho-5'-2'-deoxyribonucleoside-DNA + H2O = a 5'-end 5'-phospho-2'-deoxyribonucleoside-DNA + AMP + 2 H(+). The enzyme catalyses a 5'-end adenosine-5'-diphospho-5'-ribonucleoside-2'-deoxyribonucleotide-DNA + H2O = a 5'-end 5'-phospho-ribonucleoside-2'-deoxyribonucleotide-DNA + AMP + 2 H(+). It carries out the reaction a 3'-end 2'-deoxyribonucleotide-3'-diphospho-5'-guanosine-DNA + H2O = a 3'-end 2'-deoxyribonucleotide 3'-phosphate-DNA + GMP + 2 H(+). Its function is as follows. DNA-binding protein involved in single-strand DNA break repair, double-strand DNA break repair and base excision repair. Resolves abortive DNA ligation intermediates formed either at base excision sites, or when DNA ligases attempt to repair non-ligatable breaks induced by reactive oxygen species. Catalyzes the release of adenylate groups covalently linked to 5'-phosphate termini, resulting in the production of 5'-phosphate termini that can be efficiently rejoined. Also able to hydrolyze adenosine 5'-monophosphoramidate (AMP-NH(2)) and diadenosine tetraphosphate (AppppA), but with lower catalytic activity. Likewise, catalyzes the release of 3'-linked guanosine (DNAppG) and inosine (DNAppI) from DNA, but has higher specific activity with 5'-linked adenosine (AppDNA). This chain is Aprataxin (APTX), found in Gallus gallus (Chicken).